Consider the following 1742-residue polypeptide: Unconventional myosin-Vc (1742 aa).

An N-acetylalanine modification is found at alanine 2. The Myosin N-terminal SH3-like domain maps to 8-62 (TQYNRVWIPDPEEVWKSAEIAKDYRVGDKVLRLLLEDGTELDYSVNPESLPPLRN). In terms of domain architecture, Myosin motor spans 67 to 753 (VGENDLTALS…QVAYLEKLRL (687 aa)). ATP is bound at residue 161 to 168 (GESGAGKT). The interval 632-654 (LYLLMETLNATTPHYVRCIKPND) is actin-binding. 5 IQ domains span residues 756–779 (LRQS…FLRE), 780–806 (RRAA…VALK), 807–829 (EAWA…LYQL), 830–854 (IRMA…RKML), and 855–884 (EEHK…FVLN). Residues 884-1351 (NIQLTYRVQR…SKTIGKANDV (468 aa)) adopt a coiled-coil conformation. Positions 1421-1697 (NSTINGIKQV…VRKVQALLNS (277 aa)) constitute a Dilute domain.

It belongs to the TRAFAC class myosin-kinesin ATPase superfamily. Myosin family. Expressed chiefly in non-neuronal tissues. Particularly abundant in epithelial and glandular tissues including pancreas, prostate, mammary, stomach, colon and lung.

May be involved in transferrin trafficking. Likely to power actin-based membrane trafficking in many physiologically crucial tissues. This chain is Unconventional myosin-Vc (MYO5C), found in Homo sapiens (Human).